A 454-amino-acid chain; its full sequence is tRNA-2-methylthio-N(6)-dimethylallyladenosine synthase (454 aa).

The region spanning 6 to 122 (RHYHITTFGC…LKDLLESVFD (117 aa)) is the MTTase N-terminal domain. Residues cysteine 15, cysteine 51, cysteine 85, cysteine 157, cysteine 161, and cysteine 164 each coordinate [4Fe-4S] cluster. Residues 143–381 (RDSKVTAWVN…HLGNLKVAER (239 aa)) form the Radical SAM core domain. In terms of domain architecture, TRAM spans 383–447 (QRYFGRIEEV…PFSLTGQPVE (65 aa)).

It belongs to the methylthiotransferase family. MiaB subfamily. As to quaternary structure, monomer. [4Fe-4S] cluster serves as cofactor.

It localises to the cytoplasm. The enzyme catalyses N(6)-dimethylallyladenosine(37) in tRNA + (sulfur carrier)-SH + AH2 + 2 S-adenosyl-L-methionine = 2-methylsulfanyl-N(6)-dimethylallyladenosine(37) in tRNA + (sulfur carrier)-H + 5'-deoxyadenosine + L-methionine + A + S-adenosyl-L-homocysteine + 2 H(+). Its function is as follows. Catalyzes the methylthiolation of N6-(dimethylallyl)adenosine (i(6)A), leading to the formation of 2-methylthio-N6-(dimethylallyl)adenosine (ms(2)i(6)A) at position 37 in tRNAs that read codons beginning with uridine. This is tRNA-2-methylthio-N(6)-dimethylallyladenosine synthase from Nostoc punctiforme (strain ATCC 29133 / PCC 73102).